The chain runs to 203 residues: Cardiotrophin-2 (203 aa).

The N-terminal stretch at 1–21 is a signal peptide; that stretch reads MSCSLARLCLLTLLSPPLSSA. A glycan (N-linked (GlcNAc...) asparagine) is linked at Asn43.

It belongs to the IL-6 superfamily.

It is found in the secreted. May have an important role in neuronal precursor development and maturation. The chain is Cardiotrophin-2 (CTF2) from Pan troglodytes (Chimpanzee).